Consider the following 289-residue polypeptide: MAEQTASGYIQHHLQNLTFGHLPNGEWGFAHTAAEAKEMGFWAFHVDTLGWSVALGLIFVLIFRMAAKKATSGQPGALQNFVEVLVDFVDGSVKDSFHGRSAVIAPLALTIFVWVFLMNAVDLVPVDWIPQLAMLISGDEHIPFRAVPTTDPNATLGMALSVFALIIFYSIKVKGIGGFIGELTLHPFGSKNLFVQALLIPVNFLLEFVTLIAKPISLALRLFGNMYAGELVFILIAVMFGSGLLWLSGLGVVLQWAWAVFHILIITLQAFIFMMLTIVYLSMAHEDNH.

The next 6 helical transmembrane spans lie at 43–63, 101–121, 160–180, 193–213, 232–252, and 259–279; these read AFHV…VLIF, SAVI…MNAV, LSVF…GGFI, LFVQ…TLIA, VFIL…GLGV, and AVFH…LTIV.

The protein belongs to the ATPase A chain family. In terms of assembly, F-type ATPases have 2 components, CF(1) - the catalytic core - and CF(0) - the membrane proton channel. CF(1) has five subunits: alpha(3), beta(3), gamma(1), delta(1), epsilon(1). CF(0) has three main subunits: a(1), b(2) and c(9-12). The alpha and beta chains form an alternating ring which encloses part of the gamma chain. CF(1) is attached to CF(0) by a central stalk formed by the gamma and epsilon chains, while a peripheral stalk is formed by the delta and b chains.

It localises to the cell inner membrane. Functionally, key component of the proton channel; it plays a direct role in the translocation of protons across the membrane. This is ATP synthase subunit a from Pseudomonas savastanoi pv. phaseolicola (strain 1448A / Race 6) (Pseudomonas syringae pv. phaseolicola (strain 1448A / Race 6)).